Consider the following 379-residue polypeptide: Zinc finger protein 883 (379 aa).

C2H2-type zinc fingers lie at residues 13–35 (YLCT…QKTH), 41–63 (YECK…QRIH), 69–91 (YECN…QRVH), 97–119 (YECN…ERIH), 125–147 (YPCN…HRIH), 153–175 (YECT…QGIH), 181–203 (YQCK…QRTH), 209–231 (YECN…QRIH), 237–259 (YECN…QRTH), 265–287 (YVCK…LKIH), 293–315 (YQCN…QRTH), 321–343 (YQCN…KRIH), and 349–371 (YQCT…QKTH).

The protein belongs to the krueppel C2H2-type zinc-finger protein family.

Its subcellular location is the nucleus. May be involved in transcriptional regulation. The polypeptide is Zinc finger protein 883 (ZNF883) (Homo sapiens (Human)).